Reading from the N-terminus, the 506-residue chain is ATP synthase subunit alpha, chloroplastic (506 aa).

ATP is bound at residue 170–177 (GDRQTGKT).

It belongs to the ATPase alpha/beta chains family. In terms of assembly, F-type ATPases have 2 components, CF(1) - the catalytic core - and CF(0) - the membrane proton channel. CF(1) has five subunits: alpha(3), beta(3), gamma(1), delta(1), epsilon(1). CF(0) has four main subunits: a, b, b' and c.

The protein localises to the plastid. Its subcellular location is the chloroplast thylakoid membrane. The catalysed reaction is ATP + H2O + 4 H(+)(in) = ADP + phosphate + 5 H(+)(out). Its function is as follows. Produces ATP from ADP in the presence of a proton gradient across the membrane. The alpha chain is a regulatory subunit. The protein is ATP synthase subunit alpha, chloroplastic of Euglena gracilis.